A 101-amino-acid chain; its full sequence is Large ribosomal subunit protein uL24 (101 aa).

This sequence belongs to the universal ribosomal protein uL24 family. As to quaternary structure, part of the 50S ribosomal subunit.

Its function is as follows. One of two assembly initiator proteins, it binds directly to the 5'-end of the 23S rRNA, where it nucleates assembly of the 50S subunit. In terms of biological role, one of the proteins that surrounds the polypeptide exit tunnel on the outside of the subunit. This chain is Large ribosomal subunit protein uL24, found in Streptococcus pneumoniae (strain ATCC 700669 / Spain 23F-1).